Reading from the N-terminus, the 430-residue chain is Serine--tRNA ligase (430 aa).

237–239 (TAE) contributes to the L-serine binding site. 268 to 270 (RRE) lines the ATP pocket. An L-serine-binding site is contributed by glutamate 291. 355–358 (EISS) provides a ligand contact to ATP. Position 391 (serine 391) interacts with L-serine.

Belongs to the class-II aminoacyl-tRNA synthetase family. Type-1 seryl-tRNA synthetase subfamily. Homodimer. The tRNA molecule binds across the dimer.

The protein localises to the cytoplasm. The enzyme catalyses tRNA(Ser) + L-serine + ATP = L-seryl-tRNA(Ser) + AMP + diphosphate + H(+). It carries out the reaction tRNA(Sec) + L-serine + ATP = L-seryl-tRNA(Sec) + AMP + diphosphate + H(+). The protein operates within aminoacyl-tRNA biosynthesis; selenocysteinyl-tRNA(Sec) biosynthesis; L-seryl-tRNA(Sec) from L-serine and tRNA(Sec): step 1/1. Functionally, catalyzes the attachment of serine to tRNA(Ser). Is also able to aminoacylate tRNA(Sec) with serine, to form the misacylated tRNA L-seryl-tRNA(Sec), which will be further converted into selenocysteinyl-tRNA(Sec). This Magnetococcus marinus (strain ATCC BAA-1437 / JCM 17883 / MC-1) protein is Serine--tRNA ligase.